The sequence spans 121 residues: uncharacterized protein (121 aa).

It to M.jannaschii MJ0989.

This is an uncharacterized protein from Methanopyrus kandleri (strain AV19 / DSM 6324 / JCM 9639 / NBRC 100938).